Consider the following 117-residue polypeptide: Glutamine-rich protein (117 aa).

Low complexity predominate over residues 27 to 72; the sequence is RQQFQQQQQQQRQPQLQQQQQQQGIQQQPQGLQHQQQQFGLTQQHG. The tract at residues 27–88 is disordered; that stretch reads RQQFQQQQQQ…IVQPNPASQN (62 aa). Residues 75 to 87 are compositionally biased toward polar residues; sequence RRQNIVQPNPASQ.

Component of the acid-soluble and acid-insoluble organic matrix of calcified shell layers (at protein level).

It localises to the secreted. The sequence is that of Glutamine-rich protein from Haliotis asinina (Donkey's ear abalone).